The following is a 93-amino-acid chain: Integration host factor subunit beta (93 aa).

It belongs to the bacterial histone-like protein family. As to quaternary structure, heterodimer of an alpha and a beta chain.

In terms of biological role, this protein is one of the two subunits of integration host factor, a specific DNA-binding protein that functions in genetic recombination as well as in transcriptional and translational control. The sequence is that of Integration host factor subunit beta from Actinobacillus pleuropneumoniae serotype 7 (strain AP76).